The primary structure comprises 1076 residues: Isoleucine--tRNA ligase (1076 aa).

The 'HIGH' region signature appears at 47–57 (PYTTGQIHLGT). The 'KMSKS' region signature appears at 591 to 595 (KMSKS). An ATP-binding site is contributed by Lys594.

The protein belongs to the class-I aminoacyl-tRNA synthetase family. IleS type 2 subfamily. In terms of assembly, monomer. Requires Zn(2+) as cofactor.

The protein resides in the cytoplasm. The catalysed reaction is tRNA(Ile) + L-isoleucine + ATP = L-isoleucyl-tRNA(Ile) + AMP + diphosphate. Functionally, catalyzes the attachment of isoleucine to tRNA(Ile). As IleRS can inadvertently accommodate and process structurally similar amino acids such as valine, to avoid such errors it has two additional distinct tRNA(Ile)-dependent editing activities. One activity is designated as 'pretransfer' editing and involves the hydrolysis of activated Val-AMP. The other activity is designated 'posttransfer' editing and involves deacylation of mischarged Val-tRNA(Ile). This chain is Isoleucine--tRNA ligase, found in Methanoregula boonei (strain DSM 21154 / JCM 14090 / 6A8).